The primary structure comprises 188 residues: Cytidylate kinase (188 aa).

7–15 (GKIGSGKST) is a binding site for ATP.

Belongs to the cytidylate kinase family. Type 2 subfamily.

It localises to the cytoplasm. It catalyses the reaction CMP + ATP = CDP + ADP. The catalysed reaction is dCMP + ATP = dCDP + ADP. This chain is Cytidylate kinase (cmk), found in Thermoplasma acidophilum (strain ATCC 25905 / DSM 1728 / JCM 9062 / NBRC 15155 / AMRC-C165).